A 480-amino-acid chain; its full sequence is Ribulose bisphosphate carboxylase large chain (480 aa).

A propeptide spanning residues 1 to 2 is cleaved from the precursor; it reads MS. The residue at position 3 (Pro3) is an N-acetylproline. Position 14 is an N6,N6,N6-trimethyllysine (Lys14). Residues Asn123 and Thr173 each coordinate substrate. The active-site Proton acceptor is Lys175. Position 177 (Lys177) interacts with substrate. Residues Lys201, Asp203, and Glu204 each coordinate Mg(2+). At Lys201 the chain carries N6-carboxylysine. Catalysis depends on His294, which acts as the Proton acceptor. Residues Arg295, His327, and Ser379 each coordinate substrate.

This sequence belongs to the RuBisCO large chain family. Type I subfamily. As to quaternary structure, heterohexadecamer of 8 large chains and 8 small chains; disulfide-linked. The disulfide link is formed within the large subunit homodimers. Mg(2+) serves as cofactor. In terms of processing, the disulfide bond which can form in the large chain dimeric partners within the hexadecamer appears to be associated with oxidative stress and protein turnover.

Its subcellular location is the plastid. The protein resides in the chloroplast. The catalysed reaction is 2 (2R)-3-phosphoglycerate + 2 H(+) = D-ribulose 1,5-bisphosphate + CO2 + H2O. It catalyses the reaction D-ribulose 1,5-bisphosphate + O2 = 2-phosphoglycolate + (2R)-3-phosphoglycerate + 2 H(+). Functionally, ruBisCO catalyzes two reactions: the carboxylation of D-ribulose 1,5-bisphosphate, the primary event in carbon dioxide fixation, as well as the oxidative fragmentation of the pentose substrate in the photorespiration process. Both reactions occur simultaneously and in competition at the same active site. The chain is Ribulose bisphosphate carboxylase large chain from Basella alba (Malabar spinach).